The following is a 238-amino-acid chain: N-acetylneuraminic acid outer membrane channel protein NanC (238 aa).

A signal peptide spans 1 to 23 (MKKAKILSGVLLLCFSSPLISQA). Residues 24 to 25 (AT) are Periplasmic-facing. A transmembrane span lies at residues 26–32 (LDVRGGY). Over 33–39 (RSGSHAY) the chain is Extracellular. A membrane pass occupies residues 40-49 (ETRLKVSEGW). Topologically, residues 50–52 (QNG) are periplasmic. The hydrophobic stretch at 53–61 (WWASMESNT) threads the membrane. The Extracellular segment spans residues 62 to 76 (WNTIHDNKKENAALN). Over 77–86 (DVQVEVNYAI) the chain traverses the membrane. Over 87-91 (KLDDQ) the chain is Periplasmic. The hydrophobic stretch at 92–102 (WTVRPGMLTHF) threads the membrane. The Extracellular segment spans residues 103 to 107 (SSNGT). A transmembrane helix spans residues 108 to 117 (RYGPYVKLSW). Residues 118-122 (DATKD) are Periplasmic-facing. Positions 123 to 132 (LKFGIRYRYD) form a transmembrane segment. The Extracellular portion of the chain corresponds to 133-151 (WKAYRQQDLSGDMSRDNVH). A transmembrane helix spans residues 152 to 159 (RWDGYVTY). Topologically, residues 160–164 (HINSD) are periplasmic. Positions 165 to 173 (FTFAWQTTL) form a transmembrane segment. The Extracellular segment spans residues 174 to 190 (YSKQNDYRYANHKKWAT). The hydrophobic stretch at 191-200 (ENAFVLQYHM) threads the membrane. The Periplasmic portion of the chain corresponds to 201–203 (TPD). The segment at 204 to 212 (ITPYIEYDY) is a transmembrane helix. Over 213-228 (LDRQGVYNGRDNLSEN) the chain is Extracellular. The segment at 229–236 (SYRIGVSF) is a transmembrane helix. Residues 237–238 (KL) lie on the Periplasmic side of the membrane.

It belongs to the oligogalacturonate-specific porin KdgM (TC 1.B.35) family. NanC subfamily. In terms of assembly, monomer.

It is found in the cell outer membrane. The catalysed reaction is N-acetylneuraminate(in) = N-acetylneuraminate(out). Its function is as follows. Outer membrane channel protein allowing the entry of N-acetylneuraminic acid (Neu5Ac, the most abundant sialic acid on host cell surfaces) into the bacteria. NanC proteins form high-conductance channels which are open at low membrane potentials and which have a weak anion selectivity. The polypeptide is N-acetylneuraminic acid outer membrane channel protein NanC (nanC) (Escherichia coli O6:H1 (strain CFT073 / ATCC 700928 / UPEC)).